We begin with the raw amino-acid sequence, 166 residues long: Putative membrane protein 164 (166 aa).

The Intravirion segment spans residues 1-4; the sequence is MYHP. The chain crosses the membrane as a helical span at residues 5–25; sequence VVQVLIGLILVIILILGFYHL. Residues 26–166 lie on the Virion surface side of the membrane; the sequence is KKKSCKTDTD…TIMGIARNIL (141 aa).

The protein belongs to the asfivirus envelope protein p22 family.

It localises to the virion membrane. It is found in the host cell membrane. The chain is Putative membrane protein 164 from Ornithodoros (relapsing fever ticks).